Here is a 500-residue protein sequence, read N- to C-terminus: Enolase (500 aa).

Positions 225 and 234 each coordinate substrate. Glu-277 functions as the Proton donor in the catalytic mechanism. Mg(2+) contacts are provided by Asp-312, Glu-361, and Asp-386. The substrate site is built by Glu-361 and Asp-386. Lys-411 acts as the Proton acceptor in catalysis. Substrate is bound by residues Ser-438–Ser-441 and Lys-462.

It belongs to the enolase family. Homodimer. It depends on Mg(2+) as a cofactor.

Its subcellular location is the cytoplasm. The catalysed reaction is (2R)-2-phosphoglycerate = phosphoenolpyruvate + H2O. It functions in the pathway carbohydrate degradation; glycolysis; pyruvate from D-glyceraldehyde 3-phosphate: step 4/5. In terms of biological role, enzyme of the glycolytic pathway. Glycolysis is essential in glial cells but not in neurons; neurons rely on the citric acid cycle for their energy needs, and on lactate and alanine secreted into the hemolymph by glial cells to fuel it. In Drosophila melanogaster (Fruit fly), this protein is Enolase.